The primary structure comprises 159 residues: Ribosomal RNA large subunit methyltransferase H (159 aa).

S-adenosyl-L-methionine-binding positions include Leu-76, Gly-108, and Phe-127–Tyr-132.

The protein belongs to the RNA methyltransferase RlmH family. In terms of assembly, homodimer.

The protein localises to the cytoplasm. It catalyses the reaction pseudouridine(1915) in 23S rRNA + S-adenosyl-L-methionine = N(3)-methylpseudouridine(1915) in 23S rRNA + S-adenosyl-L-homocysteine + H(+). Its function is as follows. Specifically methylates the pseudouridine at position 1915 (m3Psi1915) in 23S rRNA. The sequence is that of Ribosomal RNA large subunit methyltransferase H from Carboxydothermus hydrogenoformans (strain ATCC BAA-161 / DSM 6008 / Z-2901).